Here is a 119-residue protein sequence, read N- to C-terminus: Large ribosomal subunit protein bL20 (119 aa).

Belongs to the bacterial ribosomal protein bL20 family.

Functionally, binds directly to 23S ribosomal RNA and is necessary for the in vitro assembly process of the 50S ribosomal subunit. It is not involved in the protein synthesizing functions of that subunit. The polypeptide is Large ribosomal subunit protein bL20 (Bradyrhizobium diazoefficiens (strain JCM 10833 / BCRC 13528 / IAM 13628 / NBRC 14792 / USDA 110)).